The chain runs to 379 residues: UPF0450 protein C17orf58 homolog (379 aa).

A signal peptide spans Met-1–Ala-17. Disordered regions lie at residues Arg-76–Thr-95 and Thr-162–His-194. Residues Ser-180–His-194 show a composition bias toward basic and acidic residues. Cystine bridges form between Cys-234/Cys-308, Cys-238/Cys-312, and Cys-249/Cys-378. The NTR domain occupies Cys-234 to Cys-378.

Belongs to the UPF0450 family.

In Xenopus laevis (African clawed frog), this protein is UPF0450 protein C17orf58 homolog.